Consider the following 431-residue polypeptide: tRNA (adenine(37)-N6)-methyltransferase (431 aa).

Residues 30-168 (TEPIGYLESC…YIADYDSPQN (139 aa)) enclose the TsaA-like domain. S-adenosyl-L-methionine contacts are provided by residues 47–49 (PRQ), 90–91 (HK), arginine 117, leucine 127, and 148–151 (IDGT). The segment at 196–242 (LSGRGKVQPRQSTKERPKCLEDRTSGENSQKSRDMSEIQHTLPEDRE) is disordered. The segment covering 207 to 242 (STKERPKCLEDRTSGENSQKSRDMSEIQHTLPEDRE) has biased composition (basic and acidic residues).

This sequence belongs to the tRNA methyltransferase O family.

The catalysed reaction is N(6)-L-threonylcarbamoyladenosine(37) in tRNA + S-adenosyl-L-methionine = N(6)-methyl,N(6)-L-threonylcarbamoyladenosine(37) in tRNA + S-adenosyl-L-homocysteine + H(+). S-adenosyl-L-methionine-dependent methyltransferase responsible for the addition of the methyl group in the formation of N6-methyl-N6-threonylcarbamoyladenosine at position 37 (m(6)t(6)A37) of the tRNA anticodon loop of tRNA(Ser)(GCU). The methyl group of m(6)t(6)A37 may improve the efficiency of the tRNA decoding ability. May bind to tRNA. The chain is tRNA (adenine(37)-N6)-methyltransferase from Mus musculus (Mouse).